Reading from the N-terminus, the 287-residue chain is NAD-dependent protein deacylase sir-2.3 (287 aa).

In terms of domain architecture, Deacetylase sirtuin-type spans Thr10–Met287. NAD(+) is bound by residues Gly35–Tyr55 and Gln116–Asp119. The Proton acceptor role is filled by His134. Zn(2+) is bound by residues Cys142, Cys145, Cys196, and Cys199. NAD(+) is bound by residues Gly236–Ser238, Asn262–Gly264, and Ile280.

This sequence belongs to the sirtuin family. Class II subfamily. As to quaternary structure, interacts with pyc-1, pcca-1 and mccc-1. It depends on Zn(2+) as a cofactor. Ubiquitously expressed with high expression in the pharynx, body wall muscles and gonad. Strong expression in a subset of non-neuronal cells in the head.

It localises to the mitochondrion matrix. The protein localises to the mitochondrion. The catalysed reaction is N(6)-acetyl-L-lysyl-[protein] + NAD(+) + H2O = 2''-O-acetyl-ADP-D-ribose + nicotinamide + L-lysyl-[protein]. In terms of biological role, NAD-dependent protein deacylase. Catalyzes the NAD-dependent hydrolysis of acyl groups from lysine residues. Plays a role in oxidative stress resistance. Might promote neuronal cell death under ischemic conditions and cell death in touch neurons induced by mec-4 channel hyperactivation, possibly downstream of the insulin-like receptor daf-2. Might attenuate the reactive oxygen species (ROS) scavenging system, that eliminates ROS in ischemic conditions, under dietary deprivation and when glycolysis is blocked. This Caenorhabditis elegans protein is NAD-dependent protein deacylase sir-2.3 (sir-2.3).